We begin with the raw amino-acid sequence, 289 residues long: 5'-3' exonuclease (289 aa).

Residues 166–256 enclose the 5'-3' exonuclease domain; sequence VEPQKIPDYL…EEDLKIKRPD (91 aa).

5'-3' exonuclease acting preferentially on double-stranded DNA. The sequence is that of 5'-3' exonuclease from Aquifex aeolicus (strain VF5).